The primary structure comprises 360 residues: Protein Wnt-2 (360 aa).

Residues 1 to 25 form the signal peptide; the sequence is MNAPLGGIWLWLPLLLTWLTPEVNS. Disulfide bonds link cysteine 76–cysteine 87, cysteine 127–cysteine 135, cysteine 137–cysteine 157, cysteine 206–cysteine 220, cysteine 208–cysteine 215, cysteine 278–cysteine 309, cysteine 294–cysteine 304, cysteine 308–cysteine 348, cysteine 324–cysteine 339, cysteine 326–cysteine 336, and cysteine 331–cysteine 332. A lipid anchor (O-palmitoleoyl serine; by PORCN) is attached at serine 212. Asparagine 295 carries N-linked (GlcNAc...) asparagine glycosylation.

This sequence belongs to the Wnt family. In terms of processing, palmitoleoylation is required for efficient binding to frizzled receptors. Depalmitoleoylation leads to Wnt signaling pathway inhibition.

Its subcellular location is the secreted. It is found in the extracellular space. The protein localises to the extracellular matrix. In terms of biological role, ligand for members of the frizzled family of seven transmembrane receptors. Functions in the canonical Wnt signaling pathway that results in activation of transcription factors of the TCF/LEF family. Functions as a upstream regulator of FGF10 expression. Plays an important role in embryonic lung development. May contribute to embryonic brain development by regulating the proliferation of dopaminergic precursors and neurons. This chain is Protein Wnt-2 (WNT2), found in Nomascus leucogenys (Northern white-cheeked gibbon).